The sequence spans 150 residues: Major facilitator superfamily domain-containing 14C pseudogene (150 aa).

The segment at 1 to 25 (MSVEPPPELEEKAASEPEAGAMPEK) is disordered. The Extracellular segment spans residues 1 to 49 (MSVEPPPELEEKAASEPEAGAMPEKRAGAQAAGSTWLQGFGPPSVYHAA). The chain crosses the membrane as a helical span at residues 50–70 (IVIFLEFFAWGLLTTPMLTVL). The Cytoplasmic segment spans residues 71–82 (HETFSQHTFLMN). Residues 83–103 (GLIQGVKGLLSFLSAPLIGAL) traverse the membrane as a helical segment. Residues 104 to 111 (SDVWGRKP) lie on the Extracellular side of the membrane. Residues 112-132 (FLLGTVFFTCFPIPLMRISPC) form a helical membrane-spanning segment. The Cytoplasmic segment spans residues 133-150 (RVWWRAPVVPATCGRRMA).

Belongs to the major facilitator superfamily.

It localises to the membrane. This Homo sapiens (Human) protein is Major facilitator superfamily domain-containing 14C pseudogene.